We begin with the raw amino-acid sequence, 250 residues long: Eukaryotic translation initiation factor 3 subunit K (250 aa).

One can recognise a PCI domain in the interval 46–229 (FDCYANLALL…KENEARSEVK (184 aa)).

This sequence belongs to the eIF-3 subunit K family. As to quaternary structure, component of the eukaryotic translation initiation factor 3 (eIF-3) complex.

The protein localises to the cytoplasm. Functionally, component of the eukaryotic translation initiation factor 3 (eIF-3) complex, which is involved in protein synthesis of a specialized repertoire of mRNAs and, together with other initiation factors, stimulates binding of mRNA and methionyl-tRNAi to the 40S ribosome. The eIF-3 complex specifically targets and initiates translation of a subset of mRNAs involved in cell proliferation. The polypeptide is Eukaryotic translation initiation factor 3 subunit K (Emericella nidulans (strain FGSC A4 / ATCC 38163 / CBS 112.46 / NRRL 194 / M139) (Aspergillus nidulans)).